A 186-amino-acid polypeptide reads, in one-letter code: Elongation factor P (186 aa).

Belongs to the elongation factor P family.

It localises to the cytoplasm. The protein operates within protein biosynthesis; polypeptide chain elongation. In terms of biological role, involved in peptide bond synthesis. Stimulates efficient translation and peptide-bond synthesis on native or reconstituted 70S ribosomes in vitro. Probably functions indirectly by altering the affinity of the ribosome for aminoacyl-tRNA, thus increasing their reactivity as acceptors for peptidyl transferase. This is Elongation factor P from Laribacter hongkongensis (strain HLHK9).